Here is a 144-residue protein sequence, read N- to C-terminus: Small ribosomal subunit protein bS6 (144 aa).

The disordered stretch occupies residues 95-144; it reads PVTTPSPMMQDDKSKPDENSRGTAAPTVNVADDSASGAQVVAAEENDTQS. Residues 104-114 are compositionally biased toward basic and acidic residues; sequence QDDKSKPDENS.

This sequence belongs to the bacterial ribosomal protein bS6 family.

In terms of biological role, binds together with bS18 to 16S ribosomal RNA. In Nitrosomonas eutropha (strain DSM 101675 / C91 / Nm57), this protein is Small ribosomal subunit protein bS6.